A 130-amino-acid chain; its full sequence is Small ribosomal subunit protein uS9 (130 aa).

The segment at 105-130 (TRDSRMKERKKPGLKGARRAPQFSKR) is disordered. Residues 111–130 (KERKKPGLKGARRAPQFSKR) show a composition bias toward basic residues.

It belongs to the universal ribosomal protein uS9 family.

This chain is Small ribosomal subunit protein uS9, found in Listeria welshimeri serovar 6b (strain ATCC 35897 / DSM 20650 / CCUG 15529 / CIP 8149 / NCTC 11857 / SLCC 5334 / V8).